We begin with the raw amino-acid sequence, 494 residues long: Alpha-amylase-related protein (494 aa).

Positions 1-20 are cleaved as a signal peptide; sequence MFKFATAVILCLVAASSTLA. Pyrrolidone carboxylic acid is present on glutamine 21. Cysteine 48 and cysteine 104 are oxidised to a cystine. Residues asparagine 118, glutamine 169, and aspartate 178 each coordinate Ca(2+). Cysteine 157 and cysteine 171 are joined by a disulfide. Arginine 206 provides a ligand contact to chloride. Aspartate 208 (nucleophile) is an active-site residue. Position 212 (histidine 212) interacts with Ca(2+). The active-site Proton donor is the glutamate 245. Positions 308 and 343 each coordinate chloride. Cystine bridges form between cysteine 376–cysteine 382, cysteine 418–cysteine 441, and cysteine 448–cysteine 460.

Belongs to the glycosyl hydrolase 13 family. In terms of assembly, monomer. It depends on Ca(2+) as a cofactor. The cofactor is chloride.

The protein resides in the secreted. It carries out the reaction Endohydrolysis of (1-&gt;4)-alpha-D-glucosidic linkages in polysaccharides containing three or more (1-&gt;4)-alpha-linked D-glucose units.. The chain is Alpha-amylase-related protein (Amyrel) from Drosophila bipectinata (Fruit fly).